The following is a 651-amino-acid chain: Mitogen-activated protein kinase kinase kinase 2 (651 aa).

Residues 68 to 330 (WRKGQLIGRG…ASELLKHPFV (263 aa)) enclose the Protein kinase domain. ATP contacts are provided by residues 74-82 (IGRGAFGTV) and Lys97. Residues 105–130 (CASKEKTQAHIQELEEEVKLLKNLSH) adopt a coiled-coil conformation. Residues Lys108 and Lys110 each participate in a glycyl lysine isopeptide (Lys-Gly) (interchain with G-Cter in ubiquitin) cross-link. The active-site Proton acceptor is Asp196. Disordered regions lie at residues 460 to 483 (GNGETETKVSMEVDHPSYSEDENE), 537 to 601 (RGFL…VALS), and 618 to 651 (KRREITRQAGMGSSPRDRSLSRHREKSRFASPGK). A compositionally biased stretch (basic and acidic residues) spans 464–477 (TETKVSMEVDHPSY). Positions 570–599 (SPESGNSSGAPKNSNASAGAEQESNSQSVA) are enriched in polar residues. Residues 605–628 (RKWKEELDQELERKRREITRQAGM) adopt a coiled-coil conformation.

Belongs to the protein kinase superfamily. STE Ser/Thr protein kinase family. MAP kinase kinase kinase subfamily. Expressed in roots and flowers.

The protein localises to the cytoplasm. The protein resides in the cytoskeleton. The enzyme catalyses L-seryl-[protein] + ATP = O-phospho-L-seryl-[protein] + ADP + H(+). The catalysed reaction is L-threonyl-[protein] + ATP = O-phospho-L-threonyl-[protein] + ADP + H(+). Its function is as follows. Involved in cortical microtubules organization and stabilization by regulating the phosphorylation state of microtubule-associated proteins such as MAP65-1. This is Mitogen-activated protein kinase kinase kinase 2 (ANP2) from Arabidopsis thaliana (Mouse-ear cress).